A 600-amino-acid chain; its full sequence is Proline--tRNA ligase (600 aa).

Belongs to the class-II aminoacyl-tRNA synthetase family. ProS type 1 subfamily. As to quaternary structure, homodimer.

Its subcellular location is the cytoplasm. The catalysed reaction is tRNA(Pro) + L-proline + ATP = L-prolyl-tRNA(Pro) + AMP + diphosphate. Its function is as follows. Catalyzes the attachment of proline to tRNA(Pro) in a two-step reaction: proline is first activated by ATP to form Pro-AMP and then transferred to the acceptor end of tRNA(Pro). As ProRS can inadvertently accommodate and process non-cognate amino acids such as alanine and cysteine, to avoid such errors it has two additional distinct editing activities against alanine. One activity is designated as 'pretransfer' editing and involves the tRNA(Pro)-independent hydrolysis of activated Ala-AMP. The other activity is designated 'posttransfer' editing and involves deacylation of mischarged Ala-tRNA(Pro). The misacylated Cys-tRNA(Pro) is not edited by ProRS. The polypeptide is Proline--tRNA ligase (Synechococcus sp. (strain RCC307)).